Here is a 105-residue protein sequence, read N- to C-terminus: UPF0235 protein RPR_04990 (105 aa).

It belongs to the UPF0235 family.

The sequence is that of UPF0235 protein RPR_04990 from Rickettsia peacockii (strain Rustic).